Reading from the N-terminus, the 323-residue chain is tRNA U34 carboxymethyltransferase (323 aa).

Carboxy-S-adenosyl-L-methionine-binding positions include K91, W105, K110, G130, 152-154, 181-182, M196, Y200, and R315; these read DPT and IE.

This sequence belongs to the class I-like SAM-binding methyltransferase superfamily. CmoB family. As to quaternary structure, homotetramer.

It carries out the reaction carboxy-S-adenosyl-L-methionine + 5-hydroxyuridine(34) in tRNA = 5-carboxymethoxyuridine(34) in tRNA + S-adenosyl-L-homocysteine + H(+). Catalyzes carboxymethyl transfer from carboxy-S-adenosyl-L-methionine (Cx-SAM) to 5-hydroxyuridine (ho5U) to form 5-carboxymethoxyuridine (cmo5U) at position 34 in tRNAs. The protein is tRNA U34 carboxymethyltransferase of Salmonella arizonae (strain ATCC BAA-731 / CDC346-86 / RSK2980).